The sequence spans 429 residues: Serine hydroxymethyltransferase (429 aa).

Residues Leu126 and 130-132 contribute to the (6S)-5,6,7,8-tetrahydrofolate site; that span reads GHL. The residue at position 235 (Lys235) is an N6-(pyridoxal phosphate)lysine. 359-361 contacts (6S)-5,6,7,8-tetrahydrofolate; sequence SPF.

This sequence belongs to the SHMT family. As to quaternary structure, homodimer. Pyridoxal 5'-phosphate serves as cofactor.

Its subcellular location is the cytoplasm. It catalyses the reaction (6R)-5,10-methylene-5,6,7,8-tetrahydrofolate + glycine + H2O = (6S)-5,6,7,8-tetrahydrofolate + L-serine. The protein operates within one-carbon metabolism; tetrahydrofolate interconversion. It participates in amino-acid biosynthesis; glycine biosynthesis; glycine from L-serine: step 1/1. Functionally, catalyzes the reversible interconversion of serine and glycine with tetrahydrofolate (THF) serving as the one-carbon carrier. This reaction serves as the major source of one-carbon groups required for the biosynthesis of purines, thymidylate, methionine, and other important biomolecules. Also exhibits THF-independent aldolase activity toward beta-hydroxyamino acids, producing glycine and aldehydes, via a retro-aldol mechanism. The protein is Serine hydroxymethyltransferase of Synechococcus sp. (strain CC9311).